The chain runs to 206 residues: MPSLLITILLLNIVIYVINTIGAATIDSLLWLFYIKLPTGTSHMAREQRRLKREVIQLKREMNATSSQDEFAKWAKLRRRHDKALETYEAKNNELTQCKSSFDMTVKSVRWAATSGLMLFLQFWYSKRPIFTLPPGWIPWQVQWVLSFPRAPMGTVSIQIWGGACATVVALVGDAVGATMGFVSASKKEGMKVGAGVGEKEGKKSQ.

The Lumenal portion of the chain corresponds to 1–4 (MPSL). Residues 5–24 (LITILLLNIVIYVINTIGAA) traverse the membrane as a helical segment. Topologically, residues 25–110 (TIDSLLWLFY…SFDMTVKSVR (86 aa)) are cytoplasmic. A coiled-coil region spans residues 42–99 (SHMAREQRRLKREVIQLKREMNATSSQDEFAKWAKLRRRHDKALETYEAKNNELTQCK). The helical transmembrane segment at 111 to 131 (WAATSGLMLFLQFWYSKRPIF) threads the bilayer. The Lumenal segment spans residues 132-155 (TLPPGWIPWQVQWVLSFPRAPMGT). Residues 156–172 (VSIQIWGGACATVVALV) form a helical membrane-spanning segment. At 173-206 (GDAVGATMGFVSASKKEGMKVGAGVGEKEGKKSQ) the chain is on the cytoplasmic side.

This sequence belongs to the WRB/GET1 family. As to quaternary structure, interacts with GET3.

It is found in the endoplasmic reticulum membrane. Its function is as follows. Required for the post-translational delivery of tail-anchored (TA) proteins to the endoplasmic reticulum. Acts as a membrane receptor for soluble GET3, which recognizes and selectively binds the transmembrane domain of TA proteins in the cytosol. The sequence is that of Protein GET1 from Ajellomyces dermatitidis (strain ER-3 / ATCC MYA-2586) (Blastomyces dermatitidis).